Reading from the N-terminus, the 75-residue chain is MTKEKISVTVDAAVLAAIDADARAAGLNRSEMIEQALRNEHLRVALRDYTAKTVPALDIDAYAQRVYQANRAAGS.

In terms of biological role, antitoxin component of a type II toxin-antitoxin (TA) system. The chain is Antitoxin MT0312 from Mycobacterium tuberculosis (strain CDC 1551 / Oshkosh).